Reading from the N-terminus, the 157-residue chain is ATP synthase subunit b' (157 aa).

Residues 22-42 traverse the membrane as a helical segment; it reads ATLPIIAVQFLLLVAVLNSLF.

The protein belongs to the ATPase B chain family. In terms of assembly, F-type ATPases have 2 components, F(1) - the catalytic core - and F(0) - the membrane proton channel. F(1) has five subunits: alpha(3), beta(3), gamma(1), delta(1), epsilon(1). F(0) has four main subunits: a(1), b(1), b'(1) and c(10-14). The alpha and beta chains form an alternating ring which encloses part of the gamma chain. F(1) is attached to F(0) by a central stalk formed by the gamma and epsilon chains, while a peripheral stalk is formed by the delta, b and b' chains.

The protein localises to the cellular thylakoid membrane. F(1)F(0) ATP synthase produces ATP from ADP in the presence of a proton or sodium gradient. F-type ATPases consist of two structural domains, F(1) containing the extramembraneous catalytic core and F(0) containing the membrane proton channel, linked together by a central stalk and a peripheral stalk. During catalysis, ATP synthesis in the catalytic domain of F(1) is coupled via a rotary mechanism of the central stalk subunits to proton translocation. Its function is as follows. Component of the F(0) channel, it forms part of the peripheral stalk, linking F(1) to F(0). The b'-subunit is a diverged and duplicated form of b found in plants and photosynthetic bacteria. This Synechococcus sp. (strain JA-3-3Ab) (Cyanobacteria bacterium Yellowstone A-Prime) protein is ATP synthase subunit b'.